The sequence spans 208 residues: Small ribosomal subunit protein uS4 (208 aa).

Residues 95–157 (RRIDNVVYRA…DRLKKLVRSN (63 aa)) enclose the S4 RNA-binding domain.

This sequence belongs to the universal ribosomal protein uS4 family. Part of the 30S ribosomal subunit. Contacts protein S5. The interaction surface between S4 and S5 is involved in control of translational fidelity.

Its function is as follows. One of the primary rRNA binding proteins, it binds directly to 16S rRNA where it nucleates assembly of the body of the 30S subunit. With S5 and S12 plays an important role in translational accuracy. The chain is Small ribosomal subunit protein uS4 from Borrelia turicatae (strain 91E135).